A 605-amino-acid polypeptide reads, in one-letter code: Alpha-amylase (605 aa).

Residues M1 to A33 form the signal peptide. 2 residues coordinate Ca(2+): N130 and D189. D219 acts as the Nucleophile in catalysis. H223 lines the Ca(2+) pocket. E253 acts as the Proton donor in catalysis. The CBM20 domain maps to G500 to R605.

This sequence belongs to the glycosyl hydrolase 13 family. Monomer. The cofactor is Ca(2+).

The enzyme catalyses Endohydrolysis of (1-&gt;4)-alpha-D-glucosidic linkages in polysaccharides containing three or more (1-&gt;4)-alpha-linked D-glucose units.. This chain is Alpha-amylase (tam), found in Thermomonospora curvata.